The chain runs to 88 residues: Putative membrane protein insertion efficiency factor (88 aa).

It belongs to the UPF0161 family.

The protein resides in the cell inner membrane. In terms of biological role, could be involved in insertion of integral membrane proteins into the membrane. The sequence is that of Putative membrane protein insertion efficiency factor from Rickettsia canadensis (strain McKiel).